The chain runs to 189 residues: Protein GrpE (189 aa).

The span at 1-38 (MTKSNETERMEESEETHSSDIRSASESDHASGSDHTES) shows a compositional bias: basic and acidic residues. The disordered stretch occupies residues 1 to 54 (MTKSNETERMEESEETHSSDIRSASESDHASGSDHTESADEIPTADAEQGELEQ).

The protein belongs to the GrpE family. In terms of assembly, homodimer.

It localises to the cytoplasm. Participates actively in the response to hyperosmotic and heat shock by preventing the aggregation of stress-denatured proteins, in association with DnaK and GrpE. It is the nucleotide exchange factor for DnaK and may function as a thermosensor. Unfolded proteins bind initially to DnaJ; upon interaction with the DnaJ-bound protein, DnaK hydrolyzes its bound ATP, resulting in the formation of a stable complex. GrpE releases ADP from DnaK; ATP binding to DnaK triggers the release of the substrate protein, thus completing the reaction cycle. Several rounds of ATP-dependent interactions between DnaJ, DnaK and GrpE are required for fully efficient folding. This Tropheryma whipplei (strain TW08/27) (Whipple's bacillus) protein is Protein GrpE.